The chain runs to 196 residues: MSSQIDAVILAGGMARRMGGDDKGLVELNGEAMIKHTIDRIKPQVKEILINANRNQTRYAEFGFKVISDEHSGFLGPLAGMITAMGQTDADYLLVVPCDCPLLPLDLVPRMLAAIEAEKAEIAVASDGEYEQPVVLLLKPSLRDSMKAFLEAGERKVDFWYIKHHFVVASFADQPNAFVNVNTPEQKQRLAIKITQ.

Residues 10-12 (LAG), Lys-23, Asn-51, Asp-69, and Asp-99 each bind GTP. Asp-99 is a Mg(2+) binding site.

This sequence belongs to the MobA family. Monomer. Requires Mg(2+) as cofactor.

The protein localises to the cytoplasm. The catalysed reaction is Mo-molybdopterin + GTP + H(+) = Mo-molybdopterin guanine dinucleotide + diphosphate. Transfers a GMP moiety from GTP to Mo-molybdopterin (Mo-MPT) cofactor (Moco or molybdenum cofactor) to form Mo-molybdopterin guanine dinucleotide (Mo-MGD) cofactor. This chain is Molybdenum cofactor guanylyltransferase, found in Shewanella sp. (strain W3-18-1).